A 105-amino-acid chain; its full sequence is Large ribosomal subunit protein bL21 (105 aa).

It belongs to the bacterial ribosomal protein bL21 family. As to quaternary structure, part of the 50S ribosomal subunit. Contacts protein L20.

Its function is as follows. This protein binds to 23S rRNA in the presence of protein L20. In Rickettsia canadensis (strain McKiel), this protein is Large ribosomal subunit protein bL21.